Consider the following 198-residue polypeptide: Putative pseudouridine methyltransferase (198 aa).

The S-adenosyl-L-methionine site is built by methionine 132 and cysteine 186.

It belongs to the methyltransferase superfamily. TrmY family.

It localises to the cytoplasm. This chain is Putative pseudouridine methyltransferase, found in Photobacterium profundum (strain SS9).